The primary structure comprises 368 residues: DNA replication and repair protein RecF (368 aa).

30–37 (GDNGAGKT) provides a ligand contact to ATP.

The protein belongs to the RecF family.

The protein localises to the cytoplasm. In terms of biological role, the RecF protein is involved in DNA metabolism; it is required for DNA replication and normal SOS inducibility. RecF binds preferentially to single-stranded, linear DNA. It also seems to bind ATP. This Xanthomonas euvesicatoria pv. vesicatoria (strain 85-10) (Xanthomonas campestris pv. vesicatoria) protein is DNA replication and repair protein RecF.